The sequence spans 190 residues: Major sperm protein 32 (190 aa).

The 118-residue stretch at 72–189 folds into the MSP domain; it reads MIQTQPGTKI…RRKNLPIEYN (118 aa).

In terms of tissue distribution, sperm.

The protein localises to the cell projection. The protein resides in the pseudopodium. It localises to the cytoplasm. Its subcellular location is the cytoskeleton. Central component in molecular interactions underlying sperm crawling. Forms an extensive filament system that extends from sperm villipoda, along the leading edge of the pseudopod. In Caenorhabditis elegans, this protein is Major sperm protein 32 (msp-32).